A 50-amino-acid chain; its full sequence is Temporin-SHa (50 aa).

The first 10 residues, 1 to 10 (FLGTINLSLC), serve as a signal peptide directing secretion. A propeptide spanning residues 11–35 (EQERDADEEERRDEPNESNVEVEKR) is cleaved from the precursor. Phe48 is subject to Phenylalanine amide.

The protein belongs to the frog skin active peptide (FSAP) family. Temporin subfamily. Expressed by the skin glands.

The protein resides in the secreted. It localises to the target cell membrane. Amphipathic alpha-helical antimicrobial peptide with highly potent activity against Gram-positive bacteria, and potent activity Gram-negative bacteria and fungi (MIC=2-30 uM). Acts through membranolytic mechanism involving rapid membrane permeabilization and depolarization. Shows a direct extra-cellular antiviral activity probably through degradation of the viral envelope. Also shows a weak indirect antiviral activity by inhibiting virus replication. Also displays anti-trypanosoma and anti-leishmania (prosmastigotes and axenic amastigotes) activity through membranolytic mechanism. Also induces apoptosis in leishmania promastigotes at high peptide concentrations. Shows moderate hemolytic activity (LC(50)=25 uM). In contrast to many antibiotics, this peptide does not induce bacterial resistance. The chain is Temporin-SHa from Pelophylax saharicus (Sahara frog).